The chain runs to 336 residues: Gastrula zinc finger protein XlCGF57.1 (336 aa).

11 C2H2-type zinc fingers span residues 6-28 (YTCTECGKGFIKKSRLVTHMKIH), 34-56 (FICTECGKGFSQKGILQTHMKTH), 62-84 (FTCTECGKNFAQITTLLRHLTIH), 90-112 (FSCTECGKHFAHKGHLVSHMKTH), 118-140 (FTCTECGKHFAQKGHLVSHMKTH), 146-168 (FTCTECGKNFAQKTNLLCHLKIH), 174-196 (FTCTECGDKFAKKNNLLRHLKIH), 202-224 (FTCTECGKAFTLKGSLVGHMKIH), 230-252 (FSCTQCGKNFTQKNSLLCHLTMH), 258-280 (FTCTECGKGFALKGNLVLHTKIH), and 286-308 (FSCTQCGKNFAQKNSLLRHLKIH).

The protein belongs to the krueppel C2H2-type zinc-finger protein family.

The protein localises to the nucleus. May be involved in transcriptional regulation. This Xenopus laevis (African clawed frog) protein is Gastrula zinc finger protein XlCGF57.1.